The sequence spans 336 residues: F420-dependent glucose-6-phosphate dehydrogenase (336 aa).

Asp39 is a binding site for coenzyme F420-(gamma-Glu)n. His40 functions as the Proton donor in the catalytic mechanism. Coenzyme F420-(gamma-Glu)n contacts are provided by residues Thr76 and 107–108; that span reads TG. Glu109 serves as the catalytic Proton acceptor. Coenzyme F420-(gamma-Glu)n-binding positions include Asn112, 177-178, and 180-181; these read GG and QV. Residues Thr195, Lys198, Lys259, and Arg283 each coordinate substrate.

This sequence belongs to the F420-dependent glucose-6-phosphate dehydrogenase family. As to quaternary structure, homodimer.

The enzyme catalyses oxidized coenzyme F420-(gamma-L-Glu)(n) + D-glucose 6-phosphate + H(+) = 6-phospho-D-glucono-1,5-lactone + reduced coenzyme F420-(gamma-L-Glu)(n). Functionally, catalyzes the coenzyme F420-dependent oxidation of glucose 6-phosphate (G6P) to 6-phosphogluconolactone. Appears to have a role in resistance to oxidative stress, via its consumption of G6P that serves as a source of reducing power to combat oxidative stress in mycobacteria. The sequence is that of F420-dependent glucose-6-phosphate dehydrogenase from Mycolicibacterium gilvum (strain PYR-GCK) (Mycobacterium gilvum (strain PYR-GCK)).